Here is a 144-residue protein sequence, read N- to C-terminus: UPF0225 protein RSc0270 (144 aa).

This sequence belongs to the UPF0225 family.

In Ralstonia nicotianae (strain ATCC BAA-1114 / GMI1000) (Ralstonia solanacearum), this protein is UPF0225 protein RSc0270.